We begin with the raw amino-acid sequence, 346 residues long: Holliday junction branch migration complex subunit RuvB (346 aa).

The segment at methionine 1–tyrosine 183 is large ATPase domain (RuvB-L). Residues isoleucine 22, arginine 23, glycine 64, lysine 67, threonine 68, threonine 69, glutamate 130 to phenylalanine 132, arginine 173, tyrosine 183, and arginine 220 contribute to the ATP site. Mg(2+) is bound at residue threonine 68. Residues serine 184–lysine 254 are small ATPAse domain (RuvB-S). The tract at residues proline 257–phenylalanine 346 is head domain (RuvB-H). Residues arginine 293, arginine 312, and arginine 317 each coordinate DNA.

Belongs to the RuvB family. Homohexamer. Forms an RuvA(8)-RuvB(12)-Holliday junction (HJ) complex. HJ DNA is sandwiched between 2 RuvA tetramers; dsDNA enters through RuvA and exits via RuvB. An RuvB hexamer assembles on each DNA strand where it exits the tetramer. Each RuvB hexamer is contacted by two RuvA subunits (via domain III) on 2 adjacent RuvB subunits; this complex drives branch migration. In the full resolvosome a probable DNA-RuvA(4)-RuvB(12)-RuvC(2) complex forms which resolves the HJ.

Its subcellular location is the cytoplasm. The enzyme catalyses ATP + H2O = ADP + phosphate + H(+). Functionally, the RuvA-RuvB-RuvC complex processes Holliday junction (HJ) DNA during genetic recombination and DNA repair, while the RuvA-RuvB complex plays an important role in the rescue of blocked DNA replication forks via replication fork reversal (RFR). RuvA specifically binds to HJ cruciform DNA, conferring on it an open structure. The RuvB hexamer acts as an ATP-dependent pump, pulling dsDNA into and through the RuvAB complex. RuvB forms 2 homohexamers on either side of HJ DNA bound by 1 or 2 RuvA tetramers; 4 subunits per hexamer contact DNA at a time. Coordinated motions by a converter formed by DNA-disengaged RuvB subunits stimulates ATP hydrolysis and nucleotide exchange. Immobilization of the converter enables RuvB to convert the ATP-contained energy into a lever motion, pulling 2 nucleotides of DNA out of the RuvA tetramer per ATP hydrolyzed, thus driving DNA branch migration. The RuvB motors rotate together with the DNA substrate, which together with the progressing nucleotide cycle form the mechanistic basis for DNA recombination by continuous HJ branch migration. Branch migration allows RuvC to scan DNA until it finds its consensus sequence, where it cleaves and resolves cruciform DNA. This Xanthomonas euvesicatoria pv. vesicatoria (strain 85-10) (Xanthomonas campestris pv. vesicatoria) protein is Holliday junction branch migration complex subunit RuvB.